The chain runs to 702 residues: Ribosomal RNA large subunit methyltransferase K/L (702 aa).

The 112-residue stretch at 43–154 (LIYQSLMWSR…KETASIALDL (112 aa)) folds into the THUMP domain.

Belongs to the methyltransferase superfamily. RlmKL family.

It localises to the cytoplasm. The catalysed reaction is guanosine(2445) in 23S rRNA + S-adenosyl-L-methionine = N(2)-methylguanosine(2445) in 23S rRNA + S-adenosyl-L-homocysteine + H(+). It carries out the reaction guanosine(2069) in 23S rRNA + S-adenosyl-L-methionine = N(2)-methylguanosine(2069) in 23S rRNA + S-adenosyl-L-homocysteine + H(+). Specifically methylates the guanine in position 2445 (m2G2445) and the guanine in position 2069 (m7G2069) of 23S rRNA. The chain is Ribosomal RNA large subunit methyltransferase K/L from Salmonella choleraesuis (strain SC-B67).